The chain runs to 185 residues: Ribosome-recycling factor (185 aa).

Residues 136–161 (MDSLKTDEKKGEIGEDDRKRRETEVQ) form a disordered region.

The protein belongs to the RRF family.

The protein localises to the cytoplasm. Functionally, responsible for the release of ribosomes from messenger RNA at the termination of protein biosynthesis. May increase the efficiency of translation by recycling ribosomes from one round of translation to another. In Rhizorhabdus wittichii (strain DSM 6014 / CCUG 31198 / JCM 15750 / NBRC 105917 / EY 4224 / RW1) (Sphingomonas wittichii), this protein is Ribosome-recycling factor.